A 588-amino-acid chain; its full sequence is MNNSINHKFHHISRAEYQELLAVSRGDAVADYIIDNVSILDLINGGEISGPIVIKGRYIAGVGAEYADAPALQRIDARGATAVPGFIDAHLHIESSMMTPVTFETATLPRGLTTVICDPHEIVNVMGEAGFAWFARCAEQARQNQYLQVSSCVPALEGCDVNGASFTLEQMLAWRDHPQVTGLAEMMDYPGVISGQNALLDKLDAFRHLTLDGHCPGLGGKELNAYITAGIENCHESYQLEEGRRKLQLGMSLMIREGSAARNLNALAPLINEFNSPQCMLCTDDRNPWEIAHEGHIDALIRRLIEQHNVPLHVAYRVASWSTARHFGLNHLGLLAPGKQADIVLLSDARKVTVQQVLVKGEPIDAQTLQAEESARLAQSAPPYGNTIARQPVSASDFALQFTPGKRYRVIDVIHNELITHSHSSVYSENGFDRDDVSFIAVLERYGQRLAPACGLLGGFGLNEGALAATVSHDSHNIVVIGRSAEEMALAVNQVIQDGGGLCVVRNGQVQSHLPLPIAGLMSTDTAQSLAEQIDALKAAARECGPLPDEPFIQMAFLSLPVIPALKLTSQGLFDGEKFAFTTLEVTE.

It belongs to the metallo-dependent hydrolases superfamily. Adenine deaminase family. Homodimer. It depends on Mn(2+) as a cofactor.

The catalysed reaction is adenine + H2O + H(+) = hypoxanthine + NH4(+). This is Adenine deaminase from Escherichia coli (strain 55989 / EAEC).